We begin with the raw amino-acid sequence, 114 residues long: Hydrogenase maturation factor HypA (114 aa).

A Ni(2+)-binding site is contributed by H2. The Zn(2+) site is built by C73, C76, C90, and C93.

It belongs to the HypA/HybF family.

Involved in the maturation of [NiFe] hydrogenases. Required for nickel insertion into the metal center of the hydrogenase. The chain is Hydrogenase maturation factor HypA from Chloroflexus aurantiacus (strain ATCC 29366 / DSM 635 / J-10-fl).